We begin with the raw amino-acid sequence, 364 residues long: Chorismate synthase (364 aa).

Residues R47 and R53 each coordinate NADP(+). Residues 124–126 (RSS), G286, 301–305 (KPTAT), and R327 each bind FMN.

The protein belongs to the chorismate synthase family. In terms of assembly, homotetramer. It depends on FMNH2 as a cofactor.

It catalyses the reaction 5-O-(1-carboxyvinyl)-3-phosphoshikimate = chorismate + phosphate. It participates in metabolic intermediate biosynthesis; chorismate biosynthesis; chorismate from D-erythrose 4-phosphate and phosphoenolpyruvate: step 7/7. Functionally, catalyzes the anti-1,4-elimination of the C-3 phosphate and the C-6 proR hydrogen from 5-enolpyruvylshikimate-3-phosphate (EPSP) to yield chorismate, which is the branch point compound that serves as the starting substrate for the three terminal pathways of aromatic amino acid biosynthesis. This reaction introduces a second double bond into the aromatic ring system. The polypeptide is Chorismate synthase (Acaryochloris marina (strain MBIC 11017)).